The chain runs to 651 residues: MESKSILEELLLKKSQQKKKMSPNNYKERLFVLTKTSLSYYEYDKMKRGSRKGSIEIKKIRCVEKVNLEEQTPVERQYPFQIVYKDGLLYVYASNEESRCQWLKALQKEIRGNPHLLIKYHSGFFVDGKFLCCQQSCKAAPGCTLWEAYADLHIAISDEKHRAPTFPERLLKIPRAVPVLKMDASSSGAILPQYDSYSKKSCGSQPTSNIRYIPREDCPDWWQVRKLKSEEDIACSNQLERNIASHSTSKMSWGFPESSSSEEEENLHAYDWFAGNISRSQSEQLLRQKGKEGAFMVRNSSQMGMYTVSLFSKAVNDKKGTVKHYHVHTNAENKLYLAENYCFDSIPKLIHYHQHNSAGMITRLRHPVSTKANKVPVSVALGSGIWELKREEITLLKELGNGQFGVVQLGQWKGQYDVAVKMIKEGAMSEDEFFQEAQTMMKLSHPKLVKFYGVCSKKYPIYIVTEYITNGCLLNYLKSHGKGLESCQLLEMCYDVCEGMAFLESHQFIHRDLAARNCLVDSDLSVKVSDFGMTRYVLDDQYVSSVGTKFPVKWSAPEVFHYFKYSSKSDVWAFGILMWEVFSLGKQPYDLYDNSEVVVKVSQGHRLYRPQLASDTIYQIMYSCWHELPEKRPTFQQLLSAIEPLREQDKP.

In terms of domain architecture, PH spans 4–111 (KSILEELLLK…WLKALQKEIR (108 aa)). The Btk-type zinc finger occupies 113–149 (NPHLLIKYHSGFFVDGKFLCCQQSCKAAPGCTLWEAY). The Zn(2+) site is built by H121, C132, C133, and C143. One can recognise an SH2 domain in the interval 272–368 (WFAGNISRSQ…GMITRLRHPV (97 aa)). The Protein kinase domain maps to 393–646 (ITLLKELGNG…QLLSAIEPLR (254 aa)). ATP-binding positions include 399-407 (LGNGQFGVV) and K421. Catalysis depends on D512, which acts as the Proton acceptor. Position 542 is a phosphotyrosine; by SRC and autocatalysis (Y542).

The protein belongs to the protein kinase superfamily. Tyr protein kinase family. TEC subfamily. In terms of assembly, interacts with BCAR1, CAV1, MYD88, PTK2/FAK1, RUFY1, RUFY2, STAT3, TIRAP and TNFRSF1B. Requires Zn(2+) as cofactor. Post-translationally, phosphorylated in response to protein I/II and to LPS. Phosphorylation at Tyr-542 by SRC and by autocatalysis leads to activation and is required for STAT3 phosphorylation by BMX. In terms of tissue distribution, specifically expressed in the endocardium of the developing heart as well as in the endocardium of the left ventricle and in the endothelium of large arteries in adult mice.

The protein resides in the cytoplasm. The catalysed reaction is L-tyrosyl-[protein] + ATP = O-phospho-L-tyrosyl-[protein] + ADP + H(+). Its activity is regulated as follows. TEK and vascular endothelial growth factor receptor 1 (FLT1) stimulate BMX tyrosine kinase activity. Activated by integrins through the mediation of PTK2/FAK1. Activated by TNF through the mediation of TNFRSF1B. Its function is as follows. Non-receptor tyrosine kinase that plays central but diverse modulatory roles in various signaling processes involved in the regulation of actin reorganization, cell migration, cell proliferation and survival, cell adhesion, and apoptosis. Participates in signal transduction stimulated by growth factor receptors, cytokine receptors, G-protein coupled receptors, antigen receptors and integrins. Induces tyrosine phosphorylation of BCAR1 in response to integrin regulation. Activation of BMX by integrins is mediated by PTK2/FAK1, a key mediator of integrin signaling events leading to the regulation of actin cytoskeleton and cell motility. Plays a critical role in TNF-induced angiogenesis, and implicated in the signaling of TEK and FLT1 receptors, 2 important receptor families essential for angiogenesis. Required for the phosphorylation and activation of STAT3, a transcription factor involved in cell differentiation. Also involved in interleukin-6 (IL6) induced differentiation. Also plays a role in programming adaptive cytoprotection against extracellular stress in different cell systems, salivary epithelial cells, brain endothelial cells, and dermal fibroblasts. May be involved in regulation of endocytosis through its interaction with an endosomal protein RUFY1. May also play a role in the growth and differentiation of hematopoietic cells; as well as in signal transduction in endocardial and arterial endothelial cells. The sequence is that of Cytoplasmic tyrosine-protein kinase BMX (Bmx) from Mus musculus (Mouse).